We begin with the raw amino-acid sequence, 136 residues long: uncharacterized protein (136 aa).

Residues 102 to 118 (FVIVFFFFSFSLSISCV) form a helical membrane-spanning segment.

The protein resides in the membrane. This is an uncharacterized protein from Saccharomyces cerevisiae (strain ATCC 204508 / S288c) (Baker's yeast).